Reading from the N-terminus, the 183-residue chain is Capsid protein (183 aa).

Residues 143–183 (LPETAVVRRRGRSPRRRTPSPRRRRSQSPRRRRSQSPASQC) form a disordered region. Basic residues predominate over residues 149–176 (VRRRGRSPRRRTPSPRRRRSQSPRRRRS). Phosphoserine; by host occurs at positions 155, 162, and 170. The stretch at 155-161 (SPRRRTP) is one 1; half-length repeat. The 3 X 8 AA repeats of S-P-R-R-R-[PR]-S-Q stretch occupies residues 155–177 (SPRRRTPSPRRRRSQSPRRRRSQ). The Bipartite nuclear localization signal signature appears at 158–175 (RRTPSPRRRRSQSPRRRR). 2 consecutive repeat copies span residues 162 to 169 (SPRRRRSQ) and 170 to 177 (SPRRRRSQ). Residues 177-183 (QSPASQC) are RNA binding.

It belongs to the orthohepadnavirus core antigen family. Homodimerizes, then multimerizes. Interacts with cytosol exposed regions of viral L glycoprotein present in the reticulum-to-Golgi compartment. Interacts with human FLNB. Phosphorylated form interacts with host importin alpha; this interaction depends on the exposure of the NLS, which itself depends upon genome maturation and/or phosphorylation of the capsid protein. Interacts with host NUP153. Post-translationally, phosphorylated by host SRPK1, SRPK2, and maybe protein kinase C or GAPDH. Phosphorylation is critical for pregenomic RNA packaging. Protein kinase C phosphorylation is stimulated by HBx protein and may play a role in transport of the viral genome to the nucleus at the late step during the viral replication cycle.

The protein resides in the virion. Its subcellular location is the host cytoplasm. Self assembles to form an icosahedral capsid. Most capsids appear to be large particles with an icosahedral symmetry of T=4 and consist of 240 copies of capsid protein, though a fraction forms smaller T=3 particles consisting of 180 capsid proteins. Entering capsids are transported along microtubules to the nucleus. Phosphorylation of the capsid is thought to induce exposure of nuclear localization signal in the C-terminal portion of the capsid protein that allows binding to the nuclear pore complex via the importin (karyopherin-) alpha and beta. Capsids are imported in intact form through the nuclear pore into the nuclear basket, where it probably binds NUP153. Only capsids that contain the mature viral genome can release the viral DNA and capsid protein into the nucleoplasm. Immature capsids get stuck in the basket. Capsids encapsulate the pre-genomic RNA and the P protein. Pre-genomic RNA is reverse-transcribed into DNA while the capsid is still in the cytoplasm. The capsid can then either be directed to the nucleus, providing more genomes for transcription, or bud through the endoplasmic reticulum to provide new virions. The polypeptide is Capsid protein (Gorilla gorilla (western gorilla)).